The following is a 407-amino-acid chain: RNA-binding motif, single-stranded-interacting protein 2 (407 aa).

Met-1 bears the N-acetylmethionine mark. The disordered stretch occupies residues 14–51 (FGYNKNNKKPYVSLSQQMAPPSPSSSTPNSSSGSTAHD). The segment covering 37-47 (SSSTPNSSSGS) has biased composition (low complexity). RRM domains lie at 56 to 129 (TNLY…MAKQ) and 135 to 220 (TNLY…FADG). Ser-106 is subject to Phosphoserine. Residues Ser-280 and Ser-285 each carry the phosphoserine modification. Over residues 374-392 (PSSSVSVEESGSQQSQVPV) the composition is skewed to low complexity. The interval 374 to 398 (PSSSVSVEESGSQQSQVPVDAPSEH) is disordered.

Its subcellular location is the nucleus. In Bos taurus (Bovine), this protein is RNA-binding motif, single-stranded-interacting protein 2 (RBMS2).